The following is a 441-amino-acid chain: Protein SPMIP7 (441 aa).

As to expression, testis specific. Expressed at the spermatid stage.

Its function is as follows. Essential for normal spermatogenesis. In Mus musculus (Mouse), this protein is Protein SPMIP7 (Spmip7).